A 673-amino-acid polypeptide reads, in one-letter code: Bifunctional polymyxin resistance protein ArnA (673 aa).

The formyltransferase ArnAFT stretch occupies residues 1–311 (MKAIVFAYHD…EMGMVPQARL (311 aa)). His-104 serves as the catalytic Proton donor; for formyltransferase activity. Residues Arg-114 and 136-140 (VSRAD) contribute to the (6R)-10-formyltetrahydrofolate site. Residues 321–673 (RRTRVLILGV…HTADATDTQG (353 aa)) are dehydrogenase ArnADH. Residues Asp-354 and 375–376 (DI) contribute to the NAD(+) site. Residues Ala-400, Tyr-405, and 439–440 (TS) contribute to the UDP-alpha-D-glucuronate site. Glu-441 functions as the Proton acceptor; for decarboxylase activity in the catalytic mechanism. Residues Arg-467, Asn-499, 533–542 (KLVDGGAQKR), and Tyr-620 each bind UDP-alpha-D-glucuronate. The active-site Proton donor; for decarboxylase activity is the Arg-626.

This sequence in the N-terminal section; belongs to the Fmt family. UDP-L-Ara4N formyltransferase subfamily. It in the C-terminal section; belongs to the NAD(P)-dependent epimerase/dehydratase family. UDP-glucuronic acid decarboxylase subfamily. As to quaternary structure, homohexamer, formed by a dimer of trimers.

The catalysed reaction is UDP-alpha-D-glucuronate + NAD(+) = UDP-beta-L-threo-pentopyranos-4-ulose + CO2 + NADH. It carries out the reaction UDP-4-amino-4-deoxy-beta-L-arabinose + (6R)-10-formyltetrahydrofolate = UDP-4-deoxy-4-formamido-beta-L-arabinose + (6S)-5,6,7,8-tetrahydrofolate + H(+). It participates in nucleotide-sugar biosynthesis; UDP-4-deoxy-4-formamido-beta-L-arabinose biosynthesis; UDP-4-deoxy-4-formamido-beta-L-arabinose from UDP-alpha-D-glucuronate: step 1/3. Its pathway is nucleotide-sugar biosynthesis; UDP-4-deoxy-4-formamido-beta-L-arabinose biosynthesis; UDP-4-deoxy-4-formamido-beta-L-arabinose from UDP-alpha-D-glucuronate: step 3/3. It functions in the pathway bacterial outer membrane biogenesis; lipopolysaccharide biosynthesis. Bifunctional enzyme that catalyzes the oxidative decarboxylation of UDP-glucuronic acid (UDP-GlcUA) to UDP-4-keto-arabinose (UDP-Ara4O) and the addition of a formyl group to UDP-4-amino-4-deoxy-L-arabinose (UDP-L-Ara4N) to form UDP-L-4-formamido-arabinose (UDP-L-Ara4FN). The modified arabinose is attached to lipid A and is required for resistance to polymyxin and cationic antimicrobial peptides. This is Bifunctional polymyxin resistance protein ArnA from Pectobacterium atrosepticum (strain SCRI 1043 / ATCC BAA-672) (Erwinia carotovora subsp. atroseptica).